Here is a 325-residue protein sequence, read N- to C-terminus: Tagatose 1,6-diphosphate aldolase 1 (325 aa).

The protein belongs to the aldolase LacD family.

It carries out the reaction D-tagatofuranose 1,6-bisphosphate = D-glyceraldehyde 3-phosphate + dihydroxyacetone phosphate. It participates in carbohydrate metabolism; D-tagatose 6-phosphate degradation; D-glyceraldehyde 3-phosphate and glycerone phosphate from D-tagatose 6-phosphate: step 2/2. The chain is Tagatose 1,6-diphosphate aldolase 1 from Streptococcus agalactiae serotype III (strain NEM316).